Reading from the N-terminus, the 444-residue chain is Sprouty-related, EVH1 domain-containing protein 1 (444 aa).

Ser-2 carries the N-acetylserine modification. In terms of domain architecture, WH1 spans 6–123 (ATSDNDNSYA…RGIRRAIEDI (118 aa)). The interval 123-151 (ISQGCPESKNEAEGADDLQANEEDSSSSL) is disordered. Residues 135–147 (EGADDLQANEEDS) are compositionally biased toward acidic residues. Lys-224 carries the post-translational modification N6-methyllysine. One can recognise a KBD domain in the interval 233–285 (SIRHVSFQDEDEIVRINPRDILIRRYADYRHPDMWKNDLERDDADSSIQFSKP). 2 positions are modified to phosphoserine: Ser-238 and Ser-308. The required for interaction with TESK1 stretch occupies residues 333–444 (SRCVYCQERF…CCGGKHKAAG (112 aa)). The region spanning 334–442 (RCVYCQERFN…CGCCGGKHKA (109 aa)) is the SPR domain.

In terms of assembly, homodimer and heterodimer. Able to interact with SPRED2 to form heterodimers. Interacts (via C-terminus) with TAOK1/MARKK (via C-terminus); the interaction does not affect TAOK1 kinase activity. Interacts (via C-terminus) with TESK1 (via C-terminus); the interaction inhibits TESK1 kinase activity. Interacts with CAV1. Interacts with RAS. Interacts with palmitoyltransferase ZDHHC17/HIP14; the interaction leads to palmitoylation of SPRED1. Post-translationally, palmitoylated by ZDHHC17/HIP14. In terms of processing, phosphorylated on tyrosine. Ubiquitinated. In terms of tissue distribution, weakly expressed in embryonic cell line HEK293.

Its subcellular location is the cell membrane. It is found in the membrane. It localises to the caveola. The protein localises to the nucleus. Its function is as follows. Tyrosine kinase substrate that inhibits growth-factor-mediated activation of MAP kinase. Negatively regulates hematopoiesis of bone marrow. Inhibits fibroblast growth factor (FGF)-induced retinal lens fiber differentiation, probably by inhibiting FGF-mediated phosphorylation of ERK1/2. Attenuates actin stress fiber formation via inhibition of TESK1-mediated phosphorylation of cofilin. Inhibits TGFB-induced epithelial-to-mesenchymal transition in lens epithelial cells. The sequence is that of Sprouty-related, EVH1 domain-containing protein 1 (SPRED1) from Homo sapiens (Human).